Here is a 112-residue protein sequence, read N- to C-terminus: Colipase (112 aa).

The first 17 residues, 1 to 17 (MEKVLILLLVALAVAYA), serve as a signal peptide directing secretion. Positions 18-22 (VPDPR) are cleaved as a propeptide — enterostatin, activation peptide. 5 cysteine pairs are disulfide-bonded: Cys-34-Cys-45, Cys-40-Cys-56, Cys-44-Cys-78, Cys-66-Cys-86, and Cys-80-Cys-104.

This sequence belongs to the colipase family. In terms of assembly, forms a 1:1 stoichiometric complex with pancreatic lipase.

Its subcellular location is the secreted. In terms of biological role, colipase is a cofactor of pancreatic lipase. It allows the lipase to anchor itself to the lipid-water interface. Without colipase the enzyme is washed off by bile salts, which have an inhibitory effect on the lipase. Its function is as follows. Enterostatin has a biological activity as a satiety signal. This Bos taurus (Bovine) protein is Colipase (CLPS).